A 263-amino-acid polypeptide reads, in one-letter code: Leucyl/phenylalanyl-tRNA--protein transferase (263 aa).

The protein belongs to the L/F-transferase family.

The protein localises to the cytoplasm. The enzyme catalyses N-terminal L-lysyl-[protein] + L-leucyl-tRNA(Leu) = N-terminal L-leucyl-L-lysyl-[protein] + tRNA(Leu) + H(+). The catalysed reaction is N-terminal L-arginyl-[protein] + L-leucyl-tRNA(Leu) = N-terminal L-leucyl-L-arginyl-[protein] + tRNA(Leu) + H(+). It carries out the reaction L-phenylalanyl-tRNA(Phe) + an N-terminal L-alpha-aminoacyl-[protein] = an N-terminal L-phenylalanyl-L-alpha-aminoacyl-[protein] + tRNA(Phe). In terms of biological role, functions in the N-end rule pathway of protein degradation where it conjugates Leu, Phe and, less efficiently, Met from aminoacyl-tRNAs to the N-termini of proteins containing an N-terminal arginine or lysine. The sequence is that of Leucyl/phenylalanyl-tRNA--protein transferase from Novosphingobium aromaticivorans (strain ATCC 700278 / DSM 12444 / CCUG 56034 / CIP 105152 / NBRC 16084 / F199).